A 578-amino-acid polypeptide reads, in one-letter code: MSNAILQYSLYLIILVLLAIPLGKYIGKVMNEEKVFLSKLILPCENFIYKVLGINEEDMDWKKYSFSVLAFSAVGFIFLFALNLLQGVLPLNPEGISGSSWDLSFNTTASFITNTNWQAYSGESQLSYLTQMLGLTVQNFLSAGVGIAVLFALIRGFTRVNKSGLGNFWRDLTRIVLYLLVPLSIVLSILLVSQGTVQNFKPYEEVALLEEIVLDDGNRVTSQIVPQGPAASQVAIKQLGTNGGGFFGVNSAHPLENPTAFSNLLEMLSILLIPAALCFTFGRNIKDKRQGRAIFIAMFTLLIIALCIIGVSEANGTPQLAQNGDVNLGYIDQSGGNMEGKESRFGVVGSSTWAAFTTAASNGSVNSMHDSFTPIGGMVTMLLMQLGEVVFGGVGCGLYGMIAFAIITVFIAGLMVGRTPEYLGKKIEPYEMKMAMLICLATPISILIGSALASINPEILNSLTNSGAHGFSEILYAYSSAGGNNGSAFAGLGANTVFINVSIGLIMLFVRFVPMIATLAIAGSLVKKKKVATSVGTLPTHNLLFIGLLIFVVLLVGALSFFPALALGPIAEFLQMIA.

Helical transmembrane passes span 3–23 (NAIL…IPLG), 65–85 (SFSV…LNLL), 134–154 (GLTV…FALI), 175–195 (IVLY…VSQG), 261–281 (FSNL…CFTF), 293–313 (AIFI…GVSE), 397–417 (GLYG…LMVG), 435–455 (AMLI…LASI), 503–523 (IGLI…AIAG), and 543–563 (LLFI…SFFP).

Belongs to the KdpA family. In terms of assembly, the system is composed of three essential subunits: KdpA, KdpB and KdpC.

It is found in the cell membrane. Functionally, part of the high-affinity ATP-driven potassium transport (or Kdp) system, which catalyzes the hydrolysis of ATP coupled with the electrogenic transport of potassium into the cytoplasm. This subunit binds the extracellular potassium ions and delivers the ions to the membrane domain of KdpB through an intramembrane tunnel. The polypeptide is Potassium-transporting ATPase potassium-binding subunit (Clostridium perfringens (strain ATCC 13124 / DSM 756 / JCM 1290 / NCIMB 6125 / NCTC 8237 / Type A)).